A 640-amino-acid chain; its full sequence is Chaperone protein DnaK (640 aa).

T198 is modified (phosphothreonine; by autocatalysis). The interval 600-640 (KTQGAGAEGSEQPHGEQEAGGAAKGETVVDADFEEVKDDKK) is disordered. The segment covering 628 to 640 (VDADFEEVKDDKK) has biased composition (acidic residues).

It belongs to the heat shock protein 70 family.

Acts as a chaperone. The protein is Chaperone protein DnaK of Geobacter sp. (strain M21).